The chain runs to 94 residues: Acylphosphatase (94 aa).

The Acylphosphatase-like domain maps to 6–92; sequence RVHVWIRGRV…EGLPTFEIRP (87 aa). Active-site residues include Arg-21 and Asn-39.

This sequence belongs to the acylphosphatase family.

It carries out the reaction an acyl phosphate + H2O = a carboxylate + phosphate + H(+). This Synechococcus sp. (strain JA-2-3B'a(2-13)) (Cyanobacteria bacterium Yellowstone B-Prime) protein is Acylphosphatase (acyP).